The following is a 101-amino-acid chain: Small ribosomal subunit protein uS14 (101 aa).

This sequence belongs to the universal ribosomal protein uS14 family. Part of the 30S ribosomal subunit. Contacts proteins S3 and S10.

Its function is as follows. Binds 16S rRNA, required for the assembly of 30S particles and may also be responsible for determining the conformation of the 16S rRNA at the A site. The polypeptide is Small ribosomal subunit protein uS14 (Brucella abortus (strain 2308)).